The sequence spans 175 residues: RNA pyrophosphohydrolase (175 aa).

The Nudix hydrolase domain maps to 6–149 (GYRPNVGIVI…KRDVYRRVMK (144 aa)). Positions 38–59 (GGINPGETAEQAMYRELFEEVG) match the Nudix box motif.

This sequence belongs to the Nudix hydrolase family. RppH subfamily. The cofactor is a divalent metal cation.

Accelerates the degradation of transcripts by removing pyrophosphate from the 5'-end of triphosphorylated RNA, leading to a more labile monophosphorylated state that can stimulate subsequent ribonuclease cleavage. The polypeptide is RNA pyrophosphohydrolase (Erwinia tasmaniensis (strain DSM 17950 / CFBP 7177 / CIP 109463 / NCPPB 4357 / Et1/99)).